The chain runs to 570 residues: Methionine--tRNA ligase (570 aa).

A 'HIGH' region motif is present at residues P11–N21. The Zn(2+) site is built by C143, C146, C156, and C159. The 'KMSKS' region motif lies at K333–S337. Position 336 (K336) interacts with ATP.

This sequence belongs to the class-I aminoacyl-tRNA synthetase family. MetG type 1 subfamily. Requires Zn(2+) as cofactor.

Its subcellular location is the cytoplasm. It carries out the reaction tRNA(Met) + L-methionine + ATP = L-methionyl-tRNA(Met) + AMP + diphosphate. Functionally, is required not only for elongation of protein synthesis but also for the initiation of all mRNA translation through initiator tRNA(fMet) aminoacylation. This Pyrobaculum aerophilum (strain ATCC 51768 / DSM 7523 / JCM 9630 / CIP 104966 / NBRC 100827 / IM2) protein is Methionine--tRNA ligase.